Here is a 548-residue protein sequence, read N- to C-terminus: MANSDSGDKEAHRSSKHGGWITLPFMLVTLLGMSITYFGWVMNLIVFLIEEFNIKSIAAVQISNIVNGVVNMLPVVAAILADSFFGNIPVISASAFISLTGISLLTLIASLDYLRPRPCETGSILCQSPSKLQLGILYAALALVITGTAGTRFILASAGANQYKKPKEQGRFFNWYFFTLYGGAITGTTAIVYAQDNASWKLGFGLCVAANLISFIIFVAGKRLYEHDQPLGSPYTSLVRVLVAATMKRKAVISYKDEDYHHRELEKETKTYVAMPSKSFRFLNRAALKTEGDSNNNMWRLCSVQEVEDFKAVLRLVPLWTSVMFLSAPLAVQMSMTVLQAMVMDRKLGPHFKVSAGSMQVIALVSGCVFIILNNWTTYPMYQKLIRKPLTPLQKVGIGHVLTILSMAISAVVEAKRLKTVENSHLMSVLWLVPALVINGIGEAFHFPANIAIFYGEFPESLRNTATSLTSVVMGISFYLSTALIDVIQRTTKWLPNDINHGRVDNVYLVLVIIGVSNFGYFLVCSWFYKYRNLKNDDHEQDLKDVTN.

Transmembrane regions (helical) follow at residues Thr-29–Ile-49, Ile-65–Phe-85, Ile-88–Ile-108, Ile-136–Ala-156, Phe-172–Val-192, Trp-200–Ala-220, Leu-316–Met-336, Val-354–Asn-374, Leu-393–Val-413, Val-429–Ala-449, Ser-468–Ile-488, and Tyr-508–Phe-528.

The protein belongs to the major facilitator superfamily. Proton-dependent oligopeptide transporter (POT/PTR) (TC 2.A.17) family. Strongly expressed in the root stele.

The protein resides in the membrane. Functionally, transporter involved in a passive nitrate efflux. The chain is Protein NRT1/ PTR FAMILY 2.4 (NPF2.4) from Arabidopsis thaliana (Mouse-ear cress).